The sequence spans 490 residues: ATP synthase subunit beta, chloroplastic (490 aa).

An ATP-binding site is contributed by 170 to 177; the sequence is GGAGVGKT.

Belongs to the ATPase alpha/beta chains family. F-type ATPases have 2 components, CF(1) - the catalytic core - and CF(0) - the membrane proton channel. CF(1) has five subunits: alpha(3), beta(3), gamma(1), delta(1), epsilon(1). CF(0) has four main subunits: a(1), b(1), b'(1) and c(9-12).

It localises to the plastid. It is found in the chloroplast thylakoid membrane. It catalyses the reaction ATP + H2O + 4 H(+)(in) = ADP + phosphate + 5 H(+)(out). Its function is as follows. Produces ATP from ADP in the presence of a proton gradient across the membrane. The catalytic sites are hosted primarily by the beta subunits. In Convolvulus arvensis (Field bindweed), this protein is ATP synthase subunit beta, chloroplastic.